The chain runs to 445 residues: Cyclin-B1-2 (445 aa).

This sequence belongs to the cyclin family. Cyclin AB subfamily. In terms of assembly, interacts with FZR2/CCS52A1, FZR1/CCS52A2 and FZR3/CCS52B. As to expression, expressed in roots, stems and flowers.

In terms of biological role, may induce mitotic cell division. The protein is Cyclin-B1-2 (CYCB1-2) of Arabidopsis thaliana (Mouse-ear cress).